Reading from the N-terminus, the 205-residue chain is Small ribosomal subunit protein uS4 (205 aa).

Over residues 1-12 the composition is skewed to basic residues; sequence MSKRVQAKHKLD. Positions 1-49 are disordered; sequence MSKRVQAKHKLDRRMGQNIWGRPKSPVNRREYGPGQHGQRRKGKMSDFG. In terms of domain architecture, S4 RNA-binding spans 94-155; sequence RRLDAVVYRS…ASRQLEIVVV (62 aa).

This sequence belongs to the universal ribosomal protein uS4 family. As to quaternary structure, part of the 30S ribosomal subunit. Contacts protein S5. The interaction surface between S4 and S5 is involved in control of translational fidelity.

Functionally, one of the primary rRNA binding proteins, it binds directly to 16S rRNA where it nucleates assembly of the body of the 30S subunit. In terms of biological role, with S5 and S12 plays an important role in translational accuracy. This is Small ribosomal subunit protein uS4 from Methylorubrum extorquens (strain CM4 / NCIMB 13688) (Methylobacterium extorquens).